We begin with the raw amino-acid sequence, 522 residues long: Glutamate--cysteine ligase, chloroplastic (522 aa).

The transit peptide at 1-45 (MALMSQAGSSHCIYSEKMKCISGHSSITSNMEMLKMKDICFGNIS) directs the protein to the chloroplast. A disulfide bond links Cys-186 and Cys-406.

This sequence belongs to the carboxylate-amine ligase family. Glutamate--cysteine ligase type 2 subfamily. In terms of assembly, homodimer or monomer when oxidized or reduced, respectively. In terms of processing, the Cys-186-Cys-406 disulfide bridge is known to modulate the enzyme activity according to the redox status. The oxidized form constitutes the active enzyme.

It is found in the plastid. It localises to the chloroplast. The catalysed reaction is L-cysteine + L-glutamate + ATP = gamma-L-glutamyl-L-cysteine + ADP + phosphate + H(+). The protein operates within sulfur metabolism; glutathione biosynthesis; glutathione from L-cysteine and L-glutamate: step 1/2. This is Glutamate--cysteine ligase, chloroplastic (GSH1) from Nicotiana tabacum (Common tobacco).